The primary structure comprises 186 residues: Elongation factor P (186 aa).

Belongs to the elongation factor P family.

It localises to the cytoplasm. Its pathway is protein biosynthesis; polypeptide chain elongation. Involved in peptide bond synthesis. Stimulates efficient translation and peptide-bond synthesis on native or reconstituted 70S ribosomes in vitro. Probably functions indirectly by altering the affinity of the ribosome for aminoacyl-tRNA, thus increasing their reactivity as acceptors for peptidyl transferase. This Beutenbergia cavernae (strain ATCC BAA-8 / DSM 12333 / CCUG 43141 / JCM 11478 / NBRC 16432 / NCIMB 13614 / HKI 0122) protein is Elongation factor P.